Consider the following 843-residue polypeptide: N-acetyltransferase ESCO1 (843 aa).

The segment at 1–78 (MSIQEKSKEN…SASCSADKTA (78 aa)) is disordered. Positions 18–28 (SEDENLEEEVE) are enriched in acidic residues. Residues 66–78 (STRSASCSADKTA) are compositionally biased toward polar residues. At Ser202 the chain carries Phosphoserine. The tract at residues 262-300 (NELRKSAHTQVSTSTKRPQIPLPLVPEHSDDQELEQAGK) is disordered. Polar residues predominate over residues 269–278 (HTQVSTSTKR). A Glycyl lysine isopeptide (Lys-Gly) (interchain with G-Cter in SUMO2) cross-link involves residue Lys335. Ser415 carries the post-translational modification Phosphoserine. Positions 546 to 584 (DRTFPGSAPNQQHSVLSDEASINRKNRDVPPNHSQLKHD) are disordered. A compositionally biased stretch (basic and acidic residues) spans 566–584 (SINRKNRDVPPNHSQLKHD). The CCHH-type zinc-finger motif lies at 620-644 (VSCNICGMLYTASNPEDETQHLLFH). Residues 775 to 777 (IWV), 783 to 788 (RKKIAS), and 815 to 817 (TPD) each bind acetyl-CoA.

Belongs to the acetyltransferase family. ECO subfamily. The subunit structure is controversial. Monomer. Homodimer. Post-translationally, phosphorylated during mitosis.

It is found in the nucleus. Its subcellular location is the chromosome. The catalysed reaction is L-lysyl-[protein] + acetyl-CoA = N(6)-acetyl-L-lysyl-[protein] + CoA + H(+). Its function is as follows. Acetyltransferase required for the establishment of sister chromatid cohesion. Couples the processes of cohesion and DNA replication to ensure that only sister chromatids become paired together. In contrast to the structural cohesins, the deposition and establishment factors are required only during S phase. Acts by mediating the acetylation of cohesin component SMC3. In Mus musculus (Mouse), this protein is N-acetyltransferase ESCO1 (Esco1).